The sequence spans 189 residues: Methylated-DNA--protein-cysteine methyltransferase (189 aa).

Residues Tyr-128 and Arg-142 each contribute to the DNA site. The active-site Nucleophile; methyl group acceptor is Cys-159. Residue Ser-165 coordinates DNA.

Belongs to the MGMT family.

The protein resides in the nucleus. It catalyses the reaction a 6-O-methyl-2'-deoxyguanosine in DNA + L-cysteinyl-[protein] = S-methyl-L-cysteinyl-[protein] + a 2'-deoxyguanosine in DNA. The enzyme catalyses a 4-O-methyl-thymidine in DNA + L-cysteinyl-[protein] = a thymidine in DNA + S-methyl-L-cysteinyl-[protein]. In terms of biological role, involved in the cellular defense against the biological effects of O6-methylguanine (O6-MeG) and O4-methylthymine (O4-MeT) in DNA. Repairs the methylated nucleobase in DNA by stoichiometrically transferring the methyl group to a cysteine residue in the enzyme. This is a suicide reaction: the enzyme is irreversibly inactivated. This chain is Methylated-DNA--protein-cysteine methyltransferase (MGT1), found in Kluyveromyces lactis (strain ATCC 8585 / CBS 2359 / DSM 70799 / NBRC 1267 / NRRL Y-1140 / WM37) (Yeast).